The chain runs to 363 residues: Phospho-N-acetylmuramoyl-pentapeptide-transferase (363 aa).

10 helical membrane passes run 15–33, 82–102, 106–126, 147–167, 183–203, 207–227, 233–253, 260–280, 285–305, and 341–361; these read FTTLFFLITLSLIVNSFIF, NTPTMGGIFIILPLLLLLLIV, FYSMGIILLFFGSLSFFIIGF, FILQSLISILFIVLAYQNGYI, IVIFPICFVTLVGLSNAVNLT, DGLASGCGSIVFYGLGTEIFI, LIIYGLIAYAMSGLCVGFLKF, IFMGDTGSLTIGATLGYISIL, FTLFIISGIFVIEALSVIIQV, and IVENFWKINILLVILGIVLKI.

The protein belongs to the glycosyltransferase 4 family. MraY subfamily. It depends on Mg(2+) as a cofactor.

It localises to the cell inner membrane. The enzyme catalyses UDP-N-acetyl-alpha-D-muramoyl-L-alanyl-gamma-D-glutamyl-meso-2,6-diaminopimeloyl-D-alanyl-D-alanine + di-trans,octa-cis-undecaprenyl phosphate = di-trans,octa-cis-undecaprenyl diphospho-N-acetyl-alpha-D-muramoyl-L-alanyl-D-glutamyl-meso-2,6-diaminopimeloyl-D-alanyl-D-alanine + UMP. It participates in cell wall biogenesis; peptidoglycan biosynthesis. Functionally, catalyzes the initial step of the lipid cycle reactions in the biosynthesis of the cell wall peptidoglycan: transfers peptidoglycan precursor phospho-MurNAc-pentapeptide from UDP-MurNAc-pentapeptide onto the lipid carrier undecaprenyl phosphate, yielding undecaprenyl-pyrophosphoryl-MurNAc-pentapeptide, known as lipid I. The sequence is that of Phospho-N-acetylmuramoyl-pentapeptide-transferase from Prochlorococcus marinus (strain MIT 9515).